Here is a 1288-residue protein sequence, read N- to C-terminus: Contactin-associated protein-like 3 (1288 aa).

Residues 1–25 form the signal peptide; it reads MASVAWAVLKVLLLLPTQTWSPVGA. The Extracellular segment spans residues 26 to 1245; the sequence is GNPPDCDAPL…LVNADRRDSA (1220 aa). The F5/8 type C domain maps to 31–177; that stretch reads CDAPLASALP…IGMRIEVYGC (147 aa). A disulfide bridge connects residues Cys31 and Cys177. Laminin G-like domains lie at 183 to 364 and 370 to 545; these read VVYF…SFSC and VPVT…IDSC. N-linked (GlcNAc...) asparagine glycosylation is found at Asn285, Asn359, Asn441, and Asn497. The cysteines at positions 332 and 364 are disulfide-linked. 4 disulfide bridges follow: Cys513–Cys545, Cys551–Cys562, Cys556–Cys571, and Cys573–Cys583. The EGF-like 1 domain maps to 551–583; that stretch reads CLPSYCEHGGECSQSWDTFSCDCLGTGYTGETC. In terms of domain architecture, Fibrinogen C-terminal spans 584–792; the sequence is HSSLYEQSCE…LLCRGDQSFW (209 aa). Asn623 and Asn706 each carry an N-linked (GlcNAc...) asparagine glycan. The region spanning 793–958 is the Laminin G-like 3 domain; sequence NSASFNTETS…TVTPGVEPGC (166 aa). Intrachain disulfides connect Cys931-Cys958, Cys962-Cys975, Cys969-Cys984, and Cys986-Cys996. Residues 962–996 enclose the EGF-like 2 domain; sequence CSTYGHLCRNGGRCREKRRGVTCDCAFSAYDGPFC. Residues 1015–1203 form the Laminin G-like 4 domain; it reads QEHYTLSENS…RGHVAPMARC (189 aa). 3 N-linked (GlcNAc...) asparagine glycosylation sites follow: Asn1023, Asn1073, and Asn1120. Cys1167 and Cys1203 are disulfide-bonded. A disordered region spans residues 1215-1236; the sequence is ELAPRLAGGAGRSGPADEGEPL. The chain crosses the membrane as a helical span at residues 1246–1266; that stretch reads VIGGVIAVVIFILLCITAIAI. Residues 1267–1288 are Cytoplasmic-facing; it reads RIYQQRKLRKENESKVSKKEEC.

Belongs to the neurexin family.

It localises to the cell membrane. Its subcellular location is the secreted. The chain is Contactin-associated protein-like 3 (CNTNAP3) from Homo sapiens (Human).